Reading from the N-terminus, the 78-residue chain is MSRVCQVTGKRPTVGNNRSHARNATRRRFLPNLQTHRFWVESESRFVKLRLSAKGMRIIDKKGIDSVLTDIRARGEKI.

The disordered stretch occupies residues 1-25 (MSRVCQVTGKRPTVGNNRSHARNAT).

This sequence belongs to the bacterial ribosomal protein bL28 family.

The chain is Large ribosomal subunit protein bL28 from Alteromonas mediterranea (strain DSM 17117 / CIP 110805 / LMG 28347 / Deep ecotype).